The primary structure comprises 245 residues: MIIPALDLIEGQVVRLFQGDYGQVTEYKVDPAEQFNLYHQAGANWLHLVDLTGAKDTTARQLDLIARLLASTPANIQIGGGVRNEADVQDLLNAGAQRVVIGSTAVKQPELVKGWMEKYGAEKIVLALDINIDENGTRNVAISGWQEDSGVTIEALLEDYLTVGLKHVLCTDISRDGTLQGSNVELYVDLCKQYPQVQFQSSGGIGSLDDIVALKGSGVAGVIVGRALLDGKFTAEEAFQCWQSE.

Asp7 (proton acceptor) is an active-site residue. Catalysis depends on Asp129, which acts as the Proton donor.

Belongs to the HisA/HisF family.

It localises to the cytoplasm. It carries out the reaction 1-(5-phospho-beta-D-ribosyl)-5-[(5-phospho-beta-D-ribosylamino)methylideneamino]imidazole-4-carboxamide = 5-[(5-phospho-1-deoxy-D-ribulos-1-ylimino)methylamino]-1-(5-phospho-beta-D-ribosyl)imidazole-4-carboxamide. Its pathway is amino-acid biosynthesis; L-histidine biosynthesis; L-histidine from 5-phospho-alpha-D-ribose 1-diphosphate: step 4/9. The protein is 1-(5-phosphoribosyl)-5-[(5-phosphoribosylamino)methylideneamino] imidazole-4-carboxamide isomerase of Aliivibrio salmonicida (strain LFI1238) (Vibrio salmonicida (strain LFI1238)).